The following is a 23-amino-acid chain: Protein YqfH (23 aa).

The protein is Protein YqfH of Escherichia coli (strain K12).